The following is a 193-amino-acid chain: MNKDHEEQLEINEVSQKNKYKSIIESLLFMSGEPINIKDLATILNCKQDKVSSLLNEMKNSYVGKDRGIKILIHNRAVQLVTKPENSIYVEKLLKTNIRQSLSQAALETLSIIAYKQPITRVAIDEIRGVKSDRAIYTLLEKNIIKECGRLDVPGKPILYGTTEEFLKFFGLDSIEAIPNLEDLLKEFSKEEN.

Belongs to the ScpB family. As to quaternary structure, homodimer. Homodimerization may be required to stabilize the binding of ScpA to the Smc head domains. Component of a cohesin-like complex composed of ScpA, ScpB and the Smc homodimer, in which ScpA and ScpB bind to the head domain of Smc. The presence of the three proteins is required for the association of the complex with DNA.

Its subcellular location is the cytoplasm. Its function is as follows. Participates in chromosomal partition during cell division. May act via the formation of a condensin-like complex containing Smc and ScpA that pull DNA away from mid-cell into both cell halves. This is Segregation and condensation protein B from Clostridium botulinum (strain Kyoto / Type A2).